A 662-amino-acid polypeptide reads, in one-letter code: DNA ligase (662 aa).

NAD(+) is bound by residues 32–36, 75–76, and glutamate 106; these read DAEYD and SL. The active-site N6-AMP-lysine intermediate is lysine 108. Arginine 129, glutamate 164, lysine 271, and lysine 295 together coordinate NAD(+). Residues cysteine 389, cysteine 392, cysteine 407, and cysteine 413 each coordinate Zn(2+). Residues 580 to 662 form the BRCT domain; sequence SSNSVLNNKI…HKVISLGVFK (83 aa).

It belongs to the NAD-dependent DNA ligase family. LigA subfamily. Mg(2+) is required as a cofactor. It depends on Mn(2+) as a cofactor.

It catalyses the reaction NAD(+) + (deoxyribonucleotide)n-3'-hydroxyl + 5'-phospho-(deoxyribonucleotide)m = (deoxyribonucleotide)n+m + AMP + beta-nicotinamide D-nucleotide.. DNA ligase that catalyzes the formation of phosphodiester linkages between 5'-phosphoryl and 3'-hydroxyl groups in double-stranded DNA using NAD as a coenzyme and as the energy source for the reaction. It is essential for DNA replication and repair of damaged DNA. This chain is DNA ligase, found in Wolbachia pipientis wMel.